A 467-amino-acid chain; its full sequence is Cis-zeatin O-glucosyltransferase 1 (467 aa).

His21 functions as the Proton acceptor in the catalytic mechanism. The an anthocyanidin site is built by His21 and Asn91. The active-site Charge relay is Asp127. UDP-alpha-D-glucose contacts are provided by Ala343, Gln345, His360, Trp363, Asn364, Ser365, Glu368, Asp384, and Gln385.

The protein belongs to the UDP-glycosyltransferase family. As to expression, highly expressed in root. Expressed at lower level in kernel and cob. Weakly expressed in leaves. Weakly or not expressed in stems.

The enzyme catalyses cis-zeatin + UDP-alpha-D-glucose = O-beta-D-glucosyl-cis-zeatin + UDP + H(+). In terms of biological role, utilizes UDP-glucose as the sugar donor and catalyzes the formation of O-beta-D-glucosyl-cis-zeatin from cis-zeatin. May regulate active versus storage forms of cytokinins and could have an impact on seed growth. This is Cis-zeatin O-glucosyltransferase 1 (CISZOG1) from Zea mays (Maize).